The sequence spans 281 residues: Probable endonuclease 4 (281 aa).

Residues H67, H107, E142, D176, H179, H211, D224, H226, and E256 each contribute to the Zn(2+) site.

It belongs to the AP endonuclease 2 family. Zn(2+) is required as a cofactor.

The enzyme catalyses Endonucleolytic cleavage to 5'-phosphooligonucleotide end-products.. Endonuclease IV plays a role in DNA repair. It cleaves phosphodiester bonds at apurinic or apyrimidinic (AP) sites, generating a 3'-hydroxyl group and a 5'-terminal sugar phosphate. This Alkaliphilus oremlandii (strain OhILAs) (Clostridium oremlandii (strain OhILAs)) protein is Probable endonuclease 4.